A 1047-amino-acid polypeptide reads, in one-letter code: Probable phospholipid-transporting ATPase IIA (1047 aa).

T2 carries the post-translational modification N-acetylthreonine. Topologically, residues 2-69 (TDNIPLQPVR…NQKYNFFTFL (68 aa)) are cytoplasmic. The helical transmembrane segment at 70-91 (PGVLFNQFKYFFNLYFLLLACS) threads the bilayer. Residues 92 to 96 (QFVPE) lie on the Extracellular side of the membrane. A helical transmembrane segment spans residues 97-119 (MRLGALYTYWVPLGFVLAVTVIR). Over 120 to 303 (EAVEEIRCYV…GLFDLEVNCL (184 aa)) the chain is Cytoplasmic. The helical transmembrane segment at 304–325 (TKILFGALVVVSLVMVALQHFA) threads the bilayer. Over 326-332 (GRWYLQI) the chain is Extracellular. The helical transmembrane segment at 333–354 (IRFLLLFSNIIPISLRVNLDMG) threads the bilayer. At 355–841 (KIVYSWVIRR…GRNSYKRSAA (487 aa)) the chain is on the cytoplasmic side. Residue D391 is the 4-aspartylphosphate intermediate of the active site. ATP contacts are provided by D391, K392, T393, E502, F544, K549, K568, R597, T677, G678, D679, R759, and K765. D391 contacts Mg(2+). Position 393 (T393) interacts with Mg(2+). Residue D785 coordinates Mg(2+). ATP is bound by residues N788 and D789. Mg(2+) is bound at residue D789. A helical transmembrane segment spans residues 842–862 (LSQFVIHRSLCISTMQAVFSS). Over 863–874 (VFYFASVPLYQG) the chain is Extracellular. The chain crosses the membrane as a helical span at residues 875–893 (FLIIGYSTIYTMFPVFSLV). Over 894-923 (LDKDVKSEVAMLYPELYKDLLKGRPLSYKT) the chain is Cytoplasmic. A helical transmembrane segment spans residues 924–942 (FLIWVLISIYQGSTIMYGA). Residues 943–949 (LLLFESE) are Extracellular-facing. Residues 950–972 (FVHIVAISFTSLILTELLMVALT) traverse the membrane as a helical segment. Residues 973–978 (IQTWHW) lie on the Cytoplasmic side of the membrane. The chain crosses the membrane as a helical span at residues 979–999 (LMTVAELLSLACYIASLVFLH). The Extracellular segment spans residues 1000-1006 (EFIDVYF). The chain crosses the membrane as a helical span at residues 1007 to 1030 (IATLSFLWKVSVITLVSCLPLYVL). Topologically, residues 1031-1047 (KYLRRRFSPPSYSKLTS) are cytoplasmic.

The protein belongs to the cation transport ATPase (P-type) (TC 3.A.3) family. Type IV subfamily. In terms of assembly, heterotrimer with MON2 and DOP1B; this complex regulates SNX3-retromer mediated endosomal sorting of WLS. Interacts with RAB5A and RAB11A. It depends on Mg(2+) as a cofactor.

The protein localises to the early endosome membrane. It localises to the recycling endosome membrane. The protein resides in the late endosome membrane. Its subcellular location is the golgi apparatus. It is found in the trans-Golgi network membrane. The protein localises to the cell membrane. It carries out the reaction ATP + H2O + phospholipidSide 1 = ADP + phosphate + phospholipidSide 2.. Plays a role in regulating membrane trafficking of cargo proteins, namely endosome to plasma membrane recycling, probably acting through RAB5 and RAB11 activation. Also involved in endosome to trans-Golgi network retrograde transport. In complex with MON2 and DOP1B, regulates SNX3 retromer-mediated endosomal sorting of WLS, a transporter of Wnt morphogens in developing tissues. Participates in the formation of endosomal carriers that direct WLS trafficking back to Golgi, away from lysosomal degradation. Appears to be implicated in intercellular communication by negatively regulating the release of exosomes. The flippase activity towards membrane lipids and its role in membrane asymmetry remains to be proved. Required for the maintenance of neurite morphology and synaptic transmission. The sequence is that of Probable phospholipid-transporting ATPase IIA from Homo sapiens (Human).